Reading from the N-terminus, the 214-residue chain is Phosphatidylserine decarboxylase proenzyme (214 aa).

Ser183 acts as the Schiff-base intermediate with substrate; via pyruvic acid in catalysis. Ser183 carries the post-translational modification Pyruvic acid (Ser); by autocatalysis.

This sequence belongs to the phosphatidylserine decarboxylase family. PSD-A subfamily. As to quaternary structure, heterodimer of a large membrane-associated beta subunit and a small pyruvoyl-containing alpha subunit. Pyruvate is required as a cofactor. Is synthesized initially as an inactive proenzyme. Formation of the active enzyme involves a self-maturation process in which the active site pyruvoyl group is generated from an internal serine residue via an autocatalytic post-translational modification. Two non-identical subunits are generated from the proenzyme in this reaction, and the pyruvate is formed at the N-terminus of the alpha chain, which is derived from the carboxyl end of the proenzyme. The post-translation cleavage follows an unusual pathway, termed non-hydrolytic serinolysis, in which the side chain hydroxyl group of the serine supplies its oxygen atom to form the C-terminus of the beta chain, while the remainder of the serine residue undergoes an oxidative deamination to produce ammonia and the pyruvoyl prosthetic group on the alpha chain.

Its subcellular location is the cell membrane. It catalyses the reaction a 1,2-diacyl-sn-glycero-3-phospho-L-serine + H(+) = a 1,2-diacyl-sn-glycero-3-phosphoethanolamine + CO2. It participates in phospholipid metabolism; phosphatidylethanolamine biosynthesis; phosphatidylethanolamine from CDP-diacylglycerol: step 2/2. Its function is as follows. Catalyzes the formation of phosphatidylethanolamine (PtdEtn) from phosphatidylserine (PtdSer). This chain is Phosphatidylserine decarboxylase proenzyme, found in Chlorobaculum parvum (strain DSM 263 / NCIMB 8327) (Chlorobium vibrioforme subsp. thiosulfatophilum).